The following is a 489-amino-acid chain: MKLEAENDLMAVRLEKLHQLQEAGIEPYGGPFEVTHSTTAIRERFDELEGQEVALAGRLLAIRSHGKASFADLQDREGRLQLYIRLDNVGPGIYELFQKLDIGDIVGVRGKVFRTHRGEISVEVRQLTLLCKSLRPLPEKWHGLKDVDLRYRQRYLDLIVNPEVKQVFITRARIIRAIRSFLDNRGFLEVETPTMHPIAGGAAARPFITHHNALDIDLYLRIALELHLKRLLVGGLEKVYEMGRIFRNEGISTKHNPEFTMLELYQAYADYYVMMDLLEEMVAYVAREALGTTVVTYQGDRLDLTPPWPRLTMLEAIKKYYGVDFDQLPTAEDARRAAISLGLEIEPGMERGKIINEVFEATVEPHLIQPTFILDYPVAISPLAKRKKENPDFTYRFEAFIAGRELANAFSELNDPIDQRRRFEAQMAERAAGDEEAHMMDEDFLQALEYGMPPAGGMGIGIDRLVMVLTDSPSIRDVILFPTMRPKEE.

2 residues coordinate Mg(2+): Glu-398 and Glu-405.

This sequence belongs to the class-II aminoacyl-tRNA synthetase family. In terms of assembly, homodimer. Mg(2+) serves as cofactor.

The protein localises to the cytoplasm. The catalysed reaction is tRNA(Lys) + L-lysine + ATP = L-lysyl-tRNA(Lys) + AMP + diphosphate. The sequence is that of Lysine--tRNA ligase from Moorella thermoacetica (strain ATCC 39073 / JCM 9320).